The following is a 250-amino-acid chain: Prophage antitermination protein Q homolog QuuQ (250 aa).

This sequence belongs to the phage antitermination Q type 2 family.

In terms of biological role, positively regulate expression of some phage genes. Bacterial host RNA polymerase modified by antitermination proteins transcribes through termination sites that otherwise prevent expression of the regulated genes. This is Prophage antitermination protein Q homolog QuuQ (quuQ) from Escherichia coli (strain K12).